Consider the following 78-residue polypeptide: Large ribosomal subunit protein bL28 (78 aa).

The segment at 1–29 (MSAHCQVTGRKPSFGKSVSHSHRRTSRRW) is disordered.

The protein belongs to the bacterial ribosomal protein bL28 family.

The sequence is that of Large ribosomal subunit protein bL28 from Corynebacterium glutamicum (strain ATCC 13032 / DSM 20300 / JCM 1318 / BCRC 11384 / CCUG 27702 / LMG 3730 / NBRC 12168 / NCIMB 10025 / NRRL B-2784 / 534).